The chain runs to 317 residues: Acetyl-coenzyme A carboxylase carboxyl transferase subunit alpha (317 aa).

Residues 37–292 (QISQKLEDTK…EEYILKAFNE (256 aa)) form the CoA carboxyltransferase C-terminal domain.

This sequence belongs to the AccA family. In terms of assembly, acetyl-CoA carboxylase is a heterohexamer composed of biotin carboxyl carrier protein (AccB), biotin carboxylase (AccC) and two subunits each of ACCase subunit alpha (AccA) and ACCase subunit beta (AccD).

It is found in the cytoplasm. It catalyses the reaction N(6)-carboxybiotinyl-L-lysyl-[protein] + acetyl-CoA = N(6)-biotinyl-L-lysyl-[protein] + malonyl-CoA. The protein operates within lipid metabolism; malonyl-CoA biosynthesis; malonyl-CoA from acetyl-CoA: step 1/1. Component of the acetyl coenzyme A carboxylase (ACC) complex. First, biotin carboxylase catalyzes the carboxylation of biotin on its carrier protein (BCCP) and then the CO(2) group is transferred by the carboxyltransferase to acetyl-CoA to form malonyl-CoA. The sequence is that of Acetyl-coenzyme A carboxylase carboxyl transferase subunit alpha from Flavobacterium psychrophilum (strain ATCC 49511 / DSM 21280 / CIP 103535 / JIP02/86).